The sequence spans 358 residues: Putative ZDHHC-type palmitoyltransferase 4 (358 aa).

4 consecutive transmembrane segments (helical) span residues F28 to F48, L57 to I77, Y171 to L191, and L210 to G230. Residues S127 to S177 enclose the DHHC domain. N255 and N296 each carry an N-linked (GlcNAc...) asparagine glycan. The tract at residues N302–K358 is disordered. The span at N305–N332 shows a compositional bias: low complexity.

Belongs to the DHHC palmitoyltransferase family.

It is found in the membrane. It carries out the reaction L-cysteinyl-[protein] + hexadecanoyl-CoA = S-hexadecanoyl-L-cysteinyl-[protein] + CoA. This chain is Putative ZDHHC-type palmitoyltransferase 4, found in Dictyostelium discoideum (Social amoeba).